The primary structure comprises 622 residues: Phosphatidylinositol 4-kinase gamma 6 (622 aa).

Residues Arg-38–Arg-95 enclose the Ubiquitin-like; degenerate domain. The PI3K/PI4K catalytic domain occupies Gly-158–Pro-459. Residues Val-164–Gly-170 form a G-loop region. ATP-binding positions include Asn-165–Ala-171, Lys-186, and Gln-277–Val-280. A catalytic loop region spans residues Leu-310–Asn-318. The activation loop stretch occupies residues Pro-339–Ile-365. ATP is bound at residue Asp-341. A Phosphoserine modification is found at Ser-565.

Belongs to the PI3/PI4-kinase family. Type II PI4K subfamily.

It catalyses the reaction a 1,2-diacyl-sn-glycero-3-phospho-(1D-myo-inositol) + ATP = a 1,2-diacyl-sn-glycero-3-phospho-(1D-myo-inositol 4-phosphate) + ADP + H(+). The phosphorylation of phosphatidylinositol (PI) to PI4P is the first committed step in the generation of phosphatidylinositol 4,5-bisphosphate (PIP2), a precursor of the second messenger inositol 1,4,5-trisphosphate (InsP3). The protein is Phosphatidylinositol 4-kinase gamma 6 (PI4KG6) of Arabidopsis thaliana (Mouse-ear cress).